The sequence spans 246 residues: tRNA (guanine-N(1)-)-methyltransferase (246 aa).

S-adenosyl-L-methionine-binding positions include G113 and 133-138 (IGDYVL).

The protein belongs to the RNA methyltransferase TrmD family. In terms of assembly, homodimer.

Its subcellular location is the cytoplasm. It carries out the reaction guanosine(37) in tRNA + S-adenosyl-L-methionine = N(1)-methylguanosine(37) in tRNA + S-adenosyl-L-homocysteine + H(+). Specifically methylates guanosine-37 in various tRNAs. This is tRNA (guanine-N(1)-)-methyltransferase from Haemophilus influenzae (strain PittGG).